A 456-amino-acid chain; its full sequence is Adenylosuccinate synthetase isozyme 1 (456 aa).

The disordered stretch occupies residues methionine 1–asparagine 30. GTP-binding positions include glycine 41–lysine 47 and glycine 69–threonine 71. Catalysis depends on aspartate 42, which acts as the Proton acceptor. 2 residues coordinate Mg(2+): aspartate 42 and glycine 69. Substrate is bound at residue aspartate 42. Residues aspartate 42–lysine 45 and asparagine 67–histidine 70 contribute to the IMP site. The active-site Proton donor is the histidine 70. Phosphoserine is present on serine 130. Threonine 162, arginine 176, asparagine 255, threonine 270, and arginine 334 together coordinate IMP. Valine 330–arginine 336 serves as a coordination point for substrate. GTP is bound by residues arginine 336, lysine 362–aspartate 364, and glycine 444–lysine 447.

This sequence belongs to the adenylosuccinate synthetase family. As to quaternary structure, homodimer. Mg(2+) serves as cofactor.

Its subcellular location is the cytoplasm. The enzyme catalyses IMP + L-aspartate + GTP = N(6)-(1,2-dicarboxyethyl)-AMP + GDP + phosphate + 2 H(+). The protein operates within purine metabolism; AMP biosynthesis via de novo pathway; AMP from IMP: step 1/2. Functionally, component of the purine nucleotide cycle (PNC), which interconverts IMP and AMP to regulate the nucleotide levels in various tissues, and which contributes to glycolysis and ammoniagenesis. Catalyzes the first committed step in the biosynthesis of AMP from IMP. In Danio rerio (Zebrafish), this protein is Adenylosuccinate synthetase isozyme 1 (adss1).